The following is a 426-amino-acid chain: UDP-N-acetylglucosamine 1-carboxyvinyltransferase (426 aa).

Residue 23–24 (KN) coordinates phosphoenolpyruvate. Arg-99 contributes to the UDP-N-acetyl-alpha-D-glucosamine binding site. Catalysis depends on Asp-123, which acts as the Proton donor. The UDP-N-acetyl-alpha-D-glucosamine site is built by Asp-311 and Ile-333.

The protein belongs to the EPSP synthase family. MurA subfamily.

It is found in the cytoplasm. It carries out the reaction phosphoenolpyruvate + UDP-N-acetyl-alpha-D-glucosamine = UDP-N-acetyl-3-O-(1-carboxyvinyl)-alpha-D-glucosamine + phosphate. It functions in the pathway cell wall biogenesis; peptidoglycan biosynthesis. Its function is as follows. Cell wall formation. Adds enolpyruvyl to UDP-N-acetylglucosamine. This Nocardia farcinica (strain IFM 10152) protein is UDP-N-acetylglucosamine 1-carboxyvinyltransferase.